Here is a 320-residue protein sequence, read N- to C-terminus: Pyrroline-5-carboxylate reductase 1, mitochondrial (320 aa).

An N-acetylserine modification is found at serine 2. NADP(+)-binding positions include 6–11 (IGAGQL) and serine 34. 9 residues coordinate NADPH: alanine 8, glutamine 10, leucine 11, serine 34, aspartate 36, asparagine 56, valine 70, lysine 71, and alanine 97. NADP(+)-binding positions include asparagine 56, 69–72 (AVKP), and 95–97 (CAA). Glutamate 164 contacts L-proline. Asparagine 230 lines the NADPH pocket. L-proline-binding residues include alanine 237 and threonine 238. Phosphoserine is present on serine 278. The disordered stretch occupies residues 292-320 (LDSPPGTSLAPSGHSKLLPRSMAPAGKQD).

This sequence belongs to the pyrroline-5-carboxylate reductase family. In terms of assembly, homodecamer; composed of 5 homodimers. Interacts with LTO1.

It localises to the mitochondrion. The enzyme catalyses L-proline + NADP(+) = (S)-1-pyrroline-5-carboxylate + NADPH + 2 H(+). It catalyses the reaction L-proline + NAD(+) = (S)-1-pyrroline-5-carboxylate + NADH + 2 H(+). It participates in amino-acid biosynthesis; L-proline biosynthesis; L-proline from L-glutamate 5-semialdehyde: step 1/1. Functionally, oxidoreductase that catalyzes the last step in proline biosynthesis, which corresponds to the reduction of pyrroline-5-carboxylate to L-proline using NAD(P)H. At physiologic concentrations, has higher specific activity in the presence of NADH. Involved in the cellular response to oxidative stress. In Bos taurus (Bovine), this protein is Pyrroline-5-carboxylate reductase 1, mitochondrial (PYCR1).